The primary structure comprises 505 residues: Glutamyl-tRNA(Gln) amidotransferase subunit B, mitochondrial (505 aa).

The protein belongs to the GatB/GatE family. GatB subfamily. In terms of assembly, subunit of the heterotrimeric GatCAB amidotransferase (AdT) complex, composed of A, B and C subunits.

It localises to the mitochondrion. It catalyses the reaction L-glutamyl-tRNA(Gln) + L-glutamine + ATP + H2O = L-glutaminyl-tRNA(Gln) + L-glutamate + ADP + phosphate + H(+). Functionally, allows the formation of correctly charged Gln-tRNA(Gln) through the transamidation of misacylated Glu-tRNA(Gln) in the mitochondria. The reaction takes place in the presence of glutamine and ATP through an activated gamma-phospho-Glu-tRNA(Gln). The protein is Glutamyl-tRNA(Gln) amidotransferase subunit B, mitochondrial of Schizosaccharomyces japonicus (strain yFS275 / FY16936) (Fission yeast).